We begin with the raw amino-acid sequence, 322 residues long: Protease HtpX homolog (322 aa).

2 helical membrane-spanning segments follow: residues 19-39 (ILLI…CYLL) and 61-81 (FINL…IAYF). H165 contacts Zn(2+). E166 is a catalytic residue. Zn(2+) is bound at residue H169. Transmembrane regions (helical) follow at residues 175-195 (VRLL…AQIA) and 216-236 (ILIL…ATLM). E245 contacts Zn(2+).

The protein belongs to the peptidase M48B family. It depends on Zn(2+) as a cofactor.

The protein resides in the cell inner membrane. In Bacteroides fragilis (strain YCH46), this protein is Protease HtpX homolog.